Reading from the N-terminus, the 276-residue chain is MEHKIREEMRVLPSIDPQFEIERRVAFIKRKLTEARCKSLVLGISGGVDSTTCGRLAQLAVEELNQQHNTTEYQFIAVRLPYGEQKDEDEAQLALSFIRPTHSVSVNIKAGVDGLHAASHHALANTGLIPSDPAKVDFIKGNVKARARMVAQYEIAGYVGGLVLGTDHSAENITGFYTKFGDGACDLAPLFGLNKRQVRLLAKTLGAPEQLVYKTPTADLEELAPQKADEAALNLTYEQIDDFLEGKAVPAEVSQRLVAIYHATQHKRQPIPTIYD.

Residue 43 to 50 (GISGGVDS) participates in ATP binding. Residue Asp-49 coordinates Mg(2+). Arg-146 is a binding site for deamido-NAD(+). ATP is bound at residue Thr-166. Glu-171 contributes to the Mg(2+) binding site. The deamido-NAD(+) site is built by Lys-179 and Asp-186. ATP contacts are provided by Lys-195 and Thr-217. 266–267 (HK) contacts deamido-NAD(+).

The protein belongs to the NAD synthetase family. As to quaternary structure, homodimer.

It catalyses the reaction deamido-NAD(+) + NH4(+) + ATP = AMP + diphosphate + NAD(+) + H(+). It functions in the pathway cofactor biosynthesis; NAD(+) biosynthesis; NAD(+) from deamido-NAD(+) (ammonia route): step 1/1. Its function is as follows. Catalyzes the ATP-dependent amidation of deamido-NAD to form NAD. Uses ammonia as a nitrogen source. The chain is NH(3)-dependent NAD(+) synthetase from Vibrio cholerae serotype O1 (strain ATCC 39541 / Classical Ogawa 395 / O395).